We begin with the raw amino-acid sequence, 396 residues long: Argininosuccinate synthase (396 aa).

Residues 10 to 18 (AYSGGLDTS) and A37 contribute to the ATP site. The L-citrulline site is built by Y88 and S93. G118 provides a ligand contact to ATP. Residues T120, N124, and D125 each coordinate L-aspartate. N124 provides a ligand contact to L-citrulline. L-citrulline-binding residues include R128, S176, S185, E261, and Y273.

The protein belongs to the argininosuccinate synthase family. Type 1 subfamily. As to quaternary structure, homotetramer.

It is found in the cytoplasm. It catalyses the reaction L-citrulline + L-aspartate + ATP = 2-(N(omega)-L-arginino)succinate + AMP + diphosphate + H(+). It participates in amino-acid biosynthesis; L-arginine biosynthesis; L-arginine from L-ornithine and carbamoyl phosphate: step 2/3. The sequence is that of Argininosuccinate synthase from Nitratidesulfovibrio vulgaris (strain ATCC 29579 / DSM 644 / CCUG 34227 / NCIMB 8303 / VKM B-1760 / Hildenborough) (Desulfovibrio vulgaris).